Here is a 325-residue protein sequence, read N- to C-terminus: Heat-inducible transcription repressor HrcA (325 aa).

This sequence belongs to the HrcA family.

In terms of biological role, negative regulator of class I heat shock genes (grpE-dnaK-dnaJ and groELS operons). Prevents heat-shock induction of these operons. This is Heat-inducible transcription repressor HrcA from Staphylococcus aureus (strain JH1).